The following is a 698-amino-acid chain: Polyribonucleotide nucleotidyltransferase (698 aa).

Positions 488 and 494 each coordinate Mg(2+). One can recognise a KH domain in the interval 555–614 (PRLLTIRIDPDKIRDVIGKGGATIRALTEETGTTIDISDDGKVTIASADKAAADEARRRI). An S1 motif domain is found at 624–692 (GTVYEGKVSK…RQGRIRLSMK (69 aa)).

It belongs to the polyribonucleotide nucleotidyltransferase family. In terms of assembly, component of the RNA degradosome, which is a multiprotein complex involved in RNA processing and mRNA degradation. It depends on Mg(2+) as a cofactor.

Its subcellular location is the cytoplasm. It catalyses the reaction RNA(n+1) + phosphate = RNA(n) + a ribonucleoside 5'-diphosphate. In terms of biological role, involved in mRNA degradation. Catalyzes the phosphorolysis of single-stranded polyribonucleotides processively in the 3'- to 5'-direction. The protein is Polyribonucleotide nucleotidyltransferase of Alkalilimnicola ehrlichii (strain ATCC BAA-1101 / DSM 17681 / MLHE-1).